We begin with the raw amino-acid sequence, 274 residues long: Large ribosomal subunit protein uL2 (274 aa).

2 disordered regions span residues 28–53 (APYA…TVRH) and 223–274 (VAMN…RRNK). Over residues 39–48 (KSGGRNNNGR) the composition is skewed to low complexity.

It belongs to the universal ribosomal protein uL2 family. As to quaternary structure, part of the 50S ribosomal subunit. Forms a bridge to the 30S subunit in the 70S ribosome.

In terms of biological role, one of the primary rRNA binding proteins. Required for association of the 30S and 50S subunits to form the 70S ribosome, for tRNA binding and peptide bond formation. It has been suggested to have peptidyltransferase activity; this is somewhat controversial. Makes several contacts with the 16S rRNA in the 70S ribosome. In Pseudoalteromonas atlantica (strain T6c / ATCC BAA-1087), this protein is Large ribosomal subunit protein uL2.